The primary structure comprises 243 residues: MEKTEESVGIRVYTTTTTQNPSPTSSRSPKPVPLSSLPMLPAGAAAGGGKGRKRRMVAKGVQKTVSKTSMLVNFLPTGTLLMFEMVLPTIYRDGDCNGINTLMIHLLLLLCAMSCFFFHFTDSFKASDGKIYYGFVTPRGLAVFMKPPSPGFGGGDVIAEKEIPVTDERYKLRVNDFVHSVMSVLVFMAIAFSDRRVTGCLFPGKEKEMDQVMESFPLMVGIVCSALFLVFPTSRYGVGCMST.

Positions 1–37 (MEKTEESVGIRVYTTTTTQNPSPTSSRSPKPVPLSSL) are disordered. A compositionally biased stretch (low complexity) spans 14-29 (TTTTTQNPSPTSSRSP). The next 4 membrane-spanning stretches (helical) occupy residues 70-90 (MLVNFLPTGTLLMFEMVLPTI), 98-118 (GINTLMIHLLLLLCAMSCFFF), 174-194 (VNDFVHSVMSVLVFMAIAFSD), and 212-232 (VMESFPLMVGIVCSALFLVFP).

This sequence belongs to the plant DMP1 protein family. Restricted to flowers.

Its subcellular location is the endoplasmic reticulum membrane. The protein localises to the vacuole membrane. In terms of biological role, involved in membrane remodeling. The chain is Protein DMP8 from Arabidopsis thaliana (Mouse-ear cress).